A 99-amino-acid chain; its full sequence is Aspartyl/glutamyl-tRNA(Asn/Gln) amidotransferase subunit C (99 aa).

It belongs to the GatC family. In terms of assembly, heterotrimer of A, B and C subunits.

It catalyses the reaction L-glutamyl-tRNA(Gln) + L-glutamine + ATP + H2O = L-glutaminyl-tRNA(Gln) + L-glutamate + ADP + phosphate + H(+). The enzyme catalyses L-aspartyl-tRNA(Asn) + L-glutamine + ATP + H2O = L-asparaginyl-tRNA(Asn) + L-glutamate + ADP + phosphate + 2 H(+). Functionally, allows the formation of correctly charged Asn-tRNA(Asn) or Gln-tRNA(Gln) through the transamidation of misacylated Asp-tRNA(Asn) or Glu-tRNA(Gln) in organisms which lack either or both of asparaginyl-tRNA or glutaminyl-tRNA synthetases. The reaction takes place in the presence of glutamine and ATP through an activated phospho-Asp-tRNA(Asn) or phospho-Glu-tRNA(Gln). The chain is Aspartyl/glutamyl-tRNA(Asn/Gln) amidotransferase subunit C from Burkholderia lata (strain ATCC 17760 / DSM 23089 / LMG 22485 / NCIMB 9086 / R18194 / 383).